The primary structure comprises 355 residues: Guanine nucleotide-binding protein G(i) subunit alpha-2 (355 aa).

Gly2 carries the N-myristoyl glycine lipid modification. Residue Cys3 is the site of S-palmitoyl cysteine attachment. The G-alpha domain maps to 32–355 (REVKLLLLGA…KNNLKDCGLF (324 aa)). The interval 35–48 (KLLLLGAGESGKST) is G1 motif. GTP-binding positions include 40-47 (GAGESGKS), 176-182 (LRTRVKT), 201-205 (DVGGQ), 270-273 (NKKD), and Ala327. Ser47 provides a ligand contact to Mg(2+). The tract at residues 174–182 (DVLRTRVKT) is G2 motif. Residue Arg179 is modified to ADP-ribosylarginine; by cholera toxin. Thr182 contacts Mg(2+). The tract at residues 197–206 (FKMFDVGGQR) is G3 motif. Gln205 bears the Deamidated glutamine; by Photorhabdus PAU_02230 mark. Residues 266-273 (ILFLNKKD) form a G4 motif region. The tract at residues 325–330 (TCATDT) is G5 motif. Cys352 carries the ADP-ribosylcysteine; by pertussis toxin modification.

It belongs to the G-alpha family. G(i/o/t/z) subfamily. As to quaternary structure, g proteins are composed of 3 units; alpha, beta and gamma. The alpha chain contains the guanine nucleotide binding site. In this context, interacts with GNB2. Interacts with GPSM1. Interacts with RGS12 and RGS14. Interacts with UNC5B. Interacts (inactive GDP-bound form) with NUCB1 (via GBA motif); the interaction leads to activation of GNAI3. Interacts (inactive GDP-bound form) with CCDC88C/DAPLE (via GBA motif). Interacts (inactive GDP-bound form) with CCDC8A/GIV (via GBA motif). Interacts with CXCR1 and CXCR2. (Microbial infection) Deamidated at Gln-205 by Photorhabdus asymbiotica toxin PAU_02230, blocking GTP hydrolysis of heterotrimeric GNAQ or GNA11 and G-alphai (GNAI1, GNAI2 or GNAI3) proteins, thereby activating RhoA.

The protein resides in the cytoplasm. Its subcellular location is the cytoskeleton. It is found in the microtubule organizing center. It localises to the centrosome. The protein localises to the cell membrane. The protein resides in the membrane. Functionally, guanine nucleotide-binding proteins (G proteins) are involved as modulators or transducers in various transmembrane signaling systems. The G(i) proteins are involved in hormonal regulation of adenylate cyclase: they inhibit the cyclase in response to beta-adrenergic stimuli. May play a role in cell division. In terms of biological role, regulates the cell surface density of dopamine receptors DRD2 by sequestrating them as an intracellular pool. In Homo sapiens (Human), this protein is Guanine nucleotide-binding protein G(i) subunit alpha-2 (GNAI2).